Consider the following 222-residue polypeptide: Protein THYLAKOID ASSEMBLY 8, chloroplastic (222 aa).

A chloroplast-targeting transit peptide spans 1 to 32 (MALSLSQTRPPSLSHSHTLSVIVPKRTFVSIR). PPR repeat units follow at residues 115–149 (DLVL…DQRS) and 150–184 (DDKA…GWGS).

It belongs to the PPR family. P subfamily.

The protein resides in the plastid. It is found in the chloroplast thylakoid membrane. Functionally, essential protein required during embryogenesis. Mediates group II organellar RNA introns splicing (e.g. ycf3-2 and trnA). Binds weakly to specific RNA. Promotes the biogenesis of chloroplast thylakoid membranes. This Arabidopsis thaliana (Mouse-ear cress) protein is Protein THYLAKOID ASSEMBLY 8, chloroplastic.